The following is a 496-amino-acid chain: Probable malate:quinone oxidoreductase (496 aa).

This sequence belongs to the MQO family. FAD serves as cofactor.

The enzyme catalyses (S)-malate + a quinone = a quinol + oxaloacetate. It functions in the pathway carbohydrate metabolism; tricarboxylic acid cycle; oxaloacetate from (S)-malate (quinone route): step 1/1. This Prochlorococcus marinus (strain NATL2A) protein is Probable malate:quinone oxidoreductase.